The chain runs to 319 residues: G-protein coupled receptor 171 (319 aa).

Topologically, residues 1–21 are extracellular; that stretch reads MTNSSFFCPVYKDLEPFTYFF. An N-linked (GlcNAc...) asparagine glycan is attached at Asn-3. The helical transmembrane segment at 22–42 threads the bilayer; it reads YLVFLVGIIGSCFATWAFIQK. Topologically, residues 43-48 are cytoplasmic; the sequence is NTNHRC. A helical transmembrane segment spans residues 49-69; it reads VSIYLINLLTADFLLTLALPV. Residues 70 to 89 are Extracellular-facing; sequence KIVVDLGVAPWKLKIFHCQV. The helical transmembrane segment at 90–110 threads the bilayer; it reads TACLIYINMYLSIIFLAFVSI. At 111-132 the chain is on the cytoplasmic side; it reads DRCLQLTHSCKIYRIQEPGFAK. A helical membrane pass occupies residues 133-153; it reads MISTVVWLMVLLIMVPNMMIP. Residues 154-181 lie on the Extracellular side of the membrane; that stretch reads IKDIKEKSNVGCMEFKKEFGRNWHLLTN. Residues 182 to 202 traverse the membrane as a helical segment; the sequence is FICVAIFLNFSAIILISNCLV. Residues 203–224 lie on the Cytoplasmic side of the membrane; that stretch reads IRQLYRNKDNENYPNVKKALIN. A helical membrane pass occupies residues 225-245; it reads ILLVTTGYIICFVPYHIVRIP. Topologically, residues 246 to 268 are extracellular; it reads YTLSQTEVITDCSTRISLFKAKE. The helical transmembrane segment at 269 to 289 threads the bilayer; the sequence is ATLLLAVSNLCFDPILYYHLS. Residues 290 to 319 are Cytoplasmic-facing; the sequence is KAFRSKVTETFASPKETKAQKEKLRCENNA.

Belongs to the G-protein coupled receptor 1 family. In terms of tissue distribution, expressed in both T-cell subsets and natural killer cells, while it is undetectable in B cells or CD14(+) monocytes. Expressed in peripheral blood mononuclear cells (PBMC) and Jurkat cells (at protein level).

It localises to the cell membrane. G-protein coupled receptor for Big LEN, a 16-amino acid neuropeptide produced from the precursor protein, proSAAS (encoded by PCSK1N). Acts through a G(i)-alpha-mediated pathway in response to Big LEN. Big LEN-GPR171 system plays an important role in regulating feeding and metabolism. Also plays a role in modulating fear and anxiety-like behaviors in the basolateral amygdala. Big LEN-GPR171 modulates the mu-type opioid receptor signaling and antinociception. Acts as a negative regulator T cell function. This is G-protein coupled receptor 171 from Homo sapiens (Human).